Consider the following 122-residue polypeptide: Large ribosomal subunit protein uL18 (122 aa).

Belongs to the universal ribosomal protein uL18 family. In terms of assembly, part of the 50S ribosomal subunit; part of the 5S rRNA/L5/L18/L25 subcomplex. Contacts the 5S and 23S rRNAs.

In terms of biological role, this is one of the proteins that bind and probably mediate the attachment of the 5S RNA into the large ribosomal subunit, where it forms part of the central protuberance. The sequence is that of Large ribosomal subunit protein uL18 from Leptospira interrogans serogroup Icterohaemorrhagiae serovar copenhageni (strain Fiocruz L1-130).